We begin with the raw amino-acid sequence, 467 residues long: Asparagine--tRNA ligase (467 aa).

It belongs to the class-II aminoacyl-tRNA synthetase family. In terms of assembly, homodimer.

Its subcellular location is the cytoplasm. The enzyme catalyses tRNA(Asn) + L-asparagine + ATP = L-asparaginyl-tRNA(Asn) + AMP + diphosphate + H(+). In Bacteroides fragilis (strain ATCC 25285 / DSM 2151 / CCUG 4856 / JCM 11019 / LMG 10263 / NCTC 9343 / Onslow / VPI 2553 / EN-2), this protein is Asparagine--tRNA ligase.